Reading from the N-terminus, the 833-residue chain is Heat shock transcription factor (833 aa).

M1 is subject to N-acetylmethionine. The span at 1-16 (MNNAANTGTTNESNVS) shows a compositional bias: polar residues. 2 disordered regions span residues 1 to 31 (MNNAANTGTTNESNVSDAPRIEPLPSLNDDD) and 62 to 92 (NPSLDPQSAASPVPSSSFFHDSRKPSTSTHL). A compositionally biased stretch (low complexity) spans 69–80 (SAASPVPSSSFF). At T97 the chain carries Phosphothreonine. Residues 150-161 (PSSGTTNAQPRQ) are compositionally biased toward polar residues. Disordered regions lie at residues 150–170 (PSSGTTNAQPRQTTRRYQSHK) and 277–309 (GSSNNHNSPSGNGNPANGSNIPLDNAAGSNNSN). Residues 170-259 (KSRPAFVNKL…SDDKWQFENE (90 aa)) mediate DNA binding. The flexible linker stretch occupies residues 260–280 (NFIRGREDLLEKIIRQKGSSN). A compositionally biased stretch (low complexity) spans 277-296 (GSSNNHNSPSGNGNPANGSN). Residues 350–403 (ELEQIKYNQIAISKDLLRINKDNELLWQENMMARERHRTQQQALEKMFRFLTSI) are involved in trimerization. Over residues 447-457 (SNDSFINDDRN) the composition is skewed to basic and acidic residues. Residues 447–493 (SNDSFINDDRNSFTNATTNARNNMSPNNDDNSIDTASTNTTNRKKNI) form a disordered region. 5 positions are modified to phosphoserine: S450, S458, S471, S478, and S528. The span at 458–487 (SFTNATTNARNNMSPNNDDNSIDTASTNTT) shows a compositional bias: polar residues. A compositionally biased stretch (polar residues) spans 542-554 (RANSSTSSENPSL). Disordered regions lie at residues 542–626 (RANS…HNES), 657–765 (GYPN…RVSP), and 778–799 (SDNLPSFNDHSYSTQADTAPEN). A compositionally biased stretch (acidic residues) spans 571–580 (PFDDEEEEET). Residues 588–600 (RDPNNQTSENTFD) are compositionally biased toward polar residues. The span at 610 to 626 (DDLKKDSHTNDNKHNES) shows a compositional bias: basic and acidic residues. Residues 660–675 (NKSFNNKTSSTNTNSN) show a composition bias toward low complexity. Residues 676-687 (MESAVNVNSPGF) are compositionally biased toward polar residues. The span at 697 to 713 (SNSPNSVHSVPSNGSGS) shows a compositional bias: low complexity. Composition is skewed to polar residues over residues 727–739 (ASTSVNQGENGSG), 752–763 (NDNNTSEGSTRV), and 778–794 (SDNLPSFNDHSYSTQAD).

It belongs to the HSF family. In terms of assembly, homotrimer. Homotrimerization increases the affinity of HSF1 to DNA. Post-translationally, exhibits temperature-dependent phosphorylation that activates the transcriptional capacity.

It localises to the nucleus. Functionally, DNA-binding transcription factor that specifically binds heat shock promoter elements (HSE) and activates transcription. The chain is Heat shock transcription factor from Saccharomyces cerevisiae (strain ATCC 204508 / S288c) (Baker's yeast).